The primary structure comprises 1402 residues: Transcription elongation factor spt-6 (1402 aa).

A disordered region spans residues 1–199 (MSNSMRDLID…PKDRGLNIDT (199 aa)). 4 stretches are compositionally biased toward acidic residues: residues 10–28 (DGEA…DEEA), 40–52 (DSSE…EDEE), 62–75 (IVDE…EDSD), and 90–102 (EEEE…DLDL). The span at 123 to 135 (HRDDHRPTERRGL) shows a compositional bias: basic and acidic residues. The span at 161-176 (DEFDDFIEDDYPEDDE) shows a compositional bias: acidic residues. The span at 177 to 199 (ERRHREEDEEVARPKDRGLNIDT) shows a compositional bias: basic and acidic residues. Positions 1094 to 1161 (GMIVAANVRV…KEFVSKLSMR (68 aa)) constitute an S1 motif domain. The region spanning 1209-1306 (PLFKPFNSTQ…KKVDELMQCD (98 aa)) is the SH2 domain.

This sequence belongs to the SPT6 family.

Its subcellular location is the nucleus. It localises to the chromosome. Its function is as follows. Histone H3-H4 chaperone that plays a role in maintenance of chromatin structure during RNA polymerase II transcription elongation thereby repressing transcription initiation from cryptic promoters. Mediates the reassembly of nucleosomes onto the promoters of at least a selected set of genes during repression; the nucleosome reassembly is essential for transcriptional repression. Essential for viability. In Neurospora crassa (strain ATCC 24698 / 74-OR23-1A / CBS 708.71 / DSM 1257 / FGSC 987), this protein is Transcription elongation factor spt-6 (spt-6).